The following is a 95-amino-acid chain: Small ribosomal subunit protein bS20c (95 aa).

This sequence belongs to the bacterial ribosomal protein bS20 family.

It is found in the plastid. Its subcellular location is the cyanelle. Its function is as follows. Binds directly to 16S ribosomal RNA. The polypeptide is Small ribosomal subunit protein bS20c (rps20) (Cyanophora paradoxa).